The primary structure comprises 339 residues: DNA-directed RNA polymerase subunit alpha (339 aa).

The tract at residues 1–233 (MVREEVAGST…DLFLPFLHAE (233 aa)) is alpha N-terminal domain (alpha-NTD). The alpha C-terminal domain (alpha-CTD) stretch occupies residues 264–339 (KKGIPLNCIF…IDLLKNKLSF (76 aa)).

The protein belongs to the RNA polymerase alpha chain family. In terms of assembly, in plastids the minimal PEP RNA polymerase catalytic core is composed of four subunits: alpha, beta, beta', and beta''. When a (nuclear-encoded) sigma factor is associated with the core the holoenzyme is formed, which can initiate transcription.

Its subcellular location is the plastid. It localises to the chloroplast. It catalyses the reaction RNA(n) + a ribonucleoside 5'-triphosphate = RNA(n+1) + diphosphate. DNA-dependent RNA polymerase catalyzes the transcription of DNA into RNA using the four ribonucleoside triphosphates as substrates. The chain is DNA-directed RNA polymerase subunit alpha from Festucopsis serpentini.